A 140-amino-acid chain; its full sequence is Holo-[acyl-carrier-protein] synthase (140 aa).

2 residues coordinate Mg(2+): Asp7 and Glu58.

The protein belongs to the P-Pant transferase superfamily. AcpS family. Mg(2+) serves as cofactor.

It is found in the cytoplasm. The catalysed reaction is apo-[ACP] + CoA = holo-[ACP] + adenosine 3',5'-bisphosphate + H(+). Transfers the 4'-phosphopantetheine moiety from coenzyme A to a Ser of acyl-carrier-protein. The chain is Holo-[acyl-carrier-protein] synthase from Chloroflexus aggregans (strain MD-66 / DSM 9485).